Reading from the N-terminus, the 821-residue chain is High affinity potassium transporter (821 aa).

The span at 1–10 (MSDSQSNKQN) shows a compositional bias: polar residues. Positions 1–47 (MSDSQSNKQNQGEDDNNVSSSIESNENYPFRLNDEESEPQSSTTESM) are disordered. Topologically, residues 1-57 (MSDSQSNKQNQGEDDNNVSSSIESNENYPFRLNDEESEPQSSTTESMLKAKKQSWRQ) are cytoplasmic. Residues 17–27 (NVSSSIESNEN) are compositionally biased toward low complexity. A helical transmembrane segment spans residues 58-78 (VLMLGFSSLGAIYGDIGTSPL). Over 79 to 101 (YVLNSIKYPNSSPTEEDIYGAIS) the chain is Extracellular. A helical transmembrane segment spans residues 102-122 (IIFYLFTFIVIFKYILIVLFL). Residues 123–190 (GTNDGEGGQV…KASGFKTNPK (68 aa)) are Cytoplasmic-facing. Residues 191–211 (LIKFISKFILFGCFFGCSLVM) form a helical membrane-spanning segment. The Extracellular segment spans residues 212 to 238 (SDGLLTPTTSVLSAIAGIQIANPSFND). Residues 239–259 (VLAVSEVVLIVLFLIQQFGSN) traverse the membrane as a helical segment. Residue Lys260 is a topological domain, cytoplasmic. Residues 261 to 281 (ISFTFAPIIFLWLIGLIISGI) form a helical membrane-spanning segment. At 282 to 306 (YNIVKFHPAVFKSLSPYYAIQLLKH) the chain is on the extracellular side. Residues 307–327 (SGIDVFSGAMLSITGTEAMFA) traverse the membrane as a helical segment. Residues 328 to 340 (DVGHFGRLPIQLT) are Cytoplasmic-facing. Residues 341-361 (LTLFVYPALIICYLGQGAYII) form a helical membrane-spanning segment. The Extracellular segment spans residues 362–386 (KHPEALSNPFFYSIPGGLNSWIYWV). Residues 387–407 (MFVLATLSTIIASQALILGVF) traverse the membrane as a helical segment. Over 408–434 (SITSQLINLDCFPNFKIIHVSKKYAGK) the chain is Cytoplasmic. Residues 435 to 455 (VYIPAINWLLMIGVCATTAGF) traverse the membrane as a helical segment. Residues 456 to 463 (KNSNNVTA) are Extracellular-facing. Residue Asn460 is glycosylated (N-linked (GlcNAc...) asparagine). Residues 464–484 (AYGLGITLDFLVTSSLIMVCM) form a helical membrane-spanning segment. Over 485–491 (TYVYNWN) the chain is Cytoplasmic. A helical membrane pass occupies residues 492–512 (ILIPITYALIFLPLEVIMVIS). At 513–516 (NLKK) the chain is on the extracellular side. Residues 517–537 (ITHGAWFPLMMSGIFMMFLSF) form a helical membrane-spanning segment. Residues 538–821 (WRWARSRKVN…KMFLGGVVRI (284 aa)) lie on the Cytoplasmic side of the membrane.

This sequence belongs to the HAK/KUP transporter (TC 2.A.72) family.

Its subcellular location is the membrane. Its function is as follows. Major high-affinity potassium uptake protein. This Schwanniomyces occidentalis (Yeast) protein is High affinity potassium transporter (HAK1).